The chain runs to 303 residues: Glutamyl-Q tRNA(Asp) synthetase (303 aa).

Residues 16-20 (RFAPS) and Glu52 contribute to the L-glutamate site. The 'HIGH' region motif lies at 19-29 (PSPSGPLHFGS). Cys108, Cys110, Tyr122, and Cys126 together coordinate Zn(2+). L-glutamate-binding residues include Tyr177 and Arg195. Residues 233-237 (KLSKQ) carry the 'KMSKS' region motif. ATP is bound at residue Lys236.

The protein belongs to the class-I aminoacyl-tRNA synthetase family. GluQ subfamily. Zn(2+) serves as cofactor.

Catalyzes the tRNA-independent activation of glutamate in presence of ATP and the subsequent transfer of glutamate onto a tRNA(Asp). Glutamate is transferred on the 2-amino-5-(4,5-dihydroxy-2-cyclopenten-1-yl) moiety of the queuosine in the wobble position of the QUC anticodon. The chain is Glutamyl-Q tRNA(Asp) synthetase from Vibrio vulnificus (strain CMCP6).